Consider the following 93-residue polypeptide: Small ribosomal subunit protein uS19c (93 aa).

This sequence belongs to the universal ribosomal protein uS19 family.

The protein resides in the plastid. The protein localises to the chloroplast. Its function is as follows. Protein S19 forms a complex with S13 that binds strongly to the 16S ribosomal RNA. In Brachypodium distachyon (Purple false brome), this protein is Small ribosomal subunit protein uS19c.